Consider the following 548-residue polypeptide: Telomerase Cajal body protein 1 (548 aa).

The tract at residues 1–142 (MKTLETQPLA…SGEPAAEDEG (142 aa)) is disordered. Over residues 15-31 (PSDQDPAPAHPSPHASP) the composition is skewed to low complexity. S26, S30, and S54 each carry phosphoserine. A Phosphoserine; by ATM modification is found at S64. S85, S90, S112, and S114 each carry phosphoserine. WD repeat units follow at residues 167-206 (QPENFLKGCKWAPDGSCILTNSADNILRIYNLPPELYHEG), 222-267 (EGDT…LRAS), 272-313 (NHLD…RDCE), 323-364 (GQSG…ALLG), 365-405 (GHQG…YPLW), and 411-450 (VTTNQRIYFDLDPTGQFLVSGSTSGAVSVWDTDGPGNDGK). T489 is subject to Phosphothreonine. S491 bears the Phosphoserine mark. The disordered stretch occupies residues 526-548 (SIPDDHQGEKGQGGTEGGVGELI). Gly residues predominate over residues 535 to 548 (KGQGGTEGGVGELI).

This sequence belongs to the TCAB1 family. As to quaternary structure, component of the telomerase holoenzyme complex composed of one molecule of TERT, one molecule of WRAP53/TCAB1, two molecules of H/ACA ribonucleoprotein complex subunits DKC1, NOP10, NHP2 and GAR1, and a telomerase RNA template component (TERC). The telomerase holoenzyme complex is associated with TEP1, SMG6/EST1A and POT1. Interacts with the chaperonin-containing T-complex (TRiC) complex; which mediates the folding of WRAP53/TCAB1. Interacts with COIL. Interacts with SMN1. Interacts with RNF8. Interacts with histone H2AX. Phosphorylated at Ser-64 by ATM in response to DNA damage, promoting its interaction with histone H2AX and localization to sites of DNA double-strand breaks. In terms of tissue distribution, expressed in all tissues and cell lines examined.

Its subcellular location is the nucleus. It is found in the cajal body. The protein resides in the chromosome. It localises to the telomere. In terms of biological role, RNA chaperone that plays a key role in telomere maintenance and RNA localization to Cajal bodies. Specifically recognizes and binds the Cajal body box (CAB box) present in both small Cajal body RNAs (scaRNAs) and telomerase RNA template component (TERC). Essential component of the telomerase holoenzyme complex, a ribonucleoprotein complex essential for the replication of chromosome termini that elongates telomeres in most eukaryotes. In the telomerase holoenzyme complex, required to stimulate the catalytic activity of the complex. Acts by specifically binding the CAB box of the TERC RNA and controlling the folding of the CR4/CR5 region of the TERC RNA, a critical step for telomerase activity. In addition, also controls telomerase holoenzyme complex localization to Cajal body. During S phase, required for delivery of TERC to telomeres during S phase and for telomerase activity. In addition to its role in telomere maintenance, also required for Cajal body formation, probably by mediating localization of scaRNAs to Cajal bodies. Also plays a role in DNA repair: phosphorylated by ATM in response to DNA damage and relocalizes to sites of DNA double-strand breaks to promote the repair of DNA double-strand breaks. Acts by recruiting the ubiquitin ligase RNF8 to DNA breaks and promote both homologous recombination (HR) and non-homologous end joining (NHEJ). The protein is Telomerase Cajal body protein 1 of Homo sapiens (Human).